Reading from the N-terminus, the 121-residue chain is Basic phospholipase A2 homolog (121 aa).

7 disulfide bridges follow: Cys-26–Cys-115, Cys-28–Cys-44, Cys-43–Cys-95, Cys-49–Cys-121, Cys-50–Cys-88, Cys-57–Cys-81, and Cys-75–Cys-86.

It belongs to the phospholipase A2 family. Group II subfamily. K49 sub-subfamily. Homodimer. Expressed by the venom gland.

It is found in the secreted. Its function is as follows. Snake venom phospholipase A2 homolog that lacks enzymatic activity, but has myotoxic and cytolytic activities. This is Basic phospholipase A2 homolog from Metlapilcoatlus nummifer (Mexican jumping pitviper).